The chain runs to 630 residues: Chaperone protein HtpG (630 aa).

The segment at 1-343 is a; substrate-binding; it reads MAKHQFQTEA…SKDLPLNVSR (343 aa). Residues 344-554 form a b region; sequence EILQSNAVMA…KEDPAFMMAQ (211 aa). The interval 555 to 630 is c; sequence IMKQMGQSGD…RLNRVIAKAI (76 aa).

Belongs to the heat shock protein 90 family. In terms of assembly, homodimer.

Its subcellular location is the cytoplasm. Molecular chaperone. Has ATPase activity. In Sulfurimonas denitrificans (strain ATCC 33889 / DSM 1251) (Thiomicrospira denitrificans (strain ATCC 33889 / DSM 1251)), this protein is Chaperone protein HtpG.